The primary structure comprises 351 residues: Protein RecA (351 aa).

Position 68 to 75 (68 to 75 (GPESSGKT)) interacts with ATP.

The protein belongs to the RecA family.

Its subcellular location is the cytoplasm. Functionally, can catalyze the hydrolysis of ATP in the presence of single-stranded DNA, the ATP-dependent uptake of single-stranded DNA by duplex DNA, and the ATP-dependent hybridization of homologous single-stranded DNAs. It interacts with LexA causing its activation and leading to its autocatalytic cleavage. This chain is Protein RecA, found in Chloroflexus aurantiacus (strain ATCC 29364 / DSM 637 / Y-400-fl).